The chain runs to 506 residues: Trans-cinnamate 4-monooxygenase (506 aa).

Residues 3 to 23 form a helical membrane-spanning segment; sequence LLLLEKALLGLFAAAVVAIAV. (E)-cinnamate contacts are provided by residues 213–218 and alanine 306; that span reads RSRLAQ. Cysteine 447 is a binding site for heme.

It belongs to the cytochrome P450 family. Heme is required as a cofactor.

It localises to the membrane. The enzyme catalyses (E)-cinnamate + reduced [NADPH--hemoprotein reductase] + O2 = (E)-4-coumarate + oxidized [NADPH--hemoprotein reductase] + H2O + H(+). Its pathway is phenylpropanoid metabolism; trans-4-coumarate biosynthesis; trans-4-coumarate from trans-cinnamate: step 1/1. Functionally, catalyzes the first oxidative step of the phenylpropanoid pathway in higher plants by transforming trans-cinnamate into p-coumarate. The compounds formed by this pathway are essential components for lignification, pollination, and defense against ultraviolet light, predators and pathogens. The polypeptide is Trans-cinnamate 4-monooxygenase (CYP73A2) (Ruta graveolens (Common rue)).